A 957-amino-acid chain; its full sequence is AP2-associated protein kinase 1 (957 aa).

Met-1 carries the N-acetylmethionine modification. The segment covering 1 to 11 has biased composition (basic and acidic residues); that stretch reads MKKFFDSRREQ. The interval 1-25 is disordered; the sequence is MKKFFDSRREQGGSGLGSGSSGGGG. Over residues 12–25 the composition is skewed to gly residues; the sequence is GGSGLGSGSSGGGG. A Phosphoserine modification is found at Ser-14. Residues 46–315 enclose the Protein kinase domain; it reads VTVDEVLAEG…QVSYFSFKLL (270 aa). ATP-binding positions include 52 to 60 and Lys-74; that span reads LAEGGFAIV. The Proton acceptor role is filled by Asp-176. A Phosphotyrosine modification is found at Tyr-234. Phosphoserine is present on Ser-235. Disordered stretches follow at residues 326–506 and 563–629; these read NSPI…AVHP and TAAA…AGHR. Thr-354 and Thr-389 each carry phosphothreonine. An Omega-N-methylarginine modification is found at Arg-391. The span at 436–448 shows a compositional bias: pro residues; that stretch reads PQAPPTSQQPPSA. Thr-441 is modified (phosphothreonine). Low complexity-rich tracts occupy residues 449-506 and 563-601; these read PAQA…AVHP and TAAA…KVQT. Thr-602 carries the phosphothreonine modification. A compositionally biased stretch (polar residues) spans 607–617; sequence IQGQKLGSLTP. Ser-614 is modified (phosphoserine). Position 616 is a phosphothreonine (Thr-616). Residues Ser-619, Ser-620, Ser-633, and Ser-646 each carry the phosphoserine modification. Residue Thr-649 is modified to Phosphothreonine. The disordered stretch occupies residues 660–697; the sequence is SLNKSKSATTTPSGSPRASQQNVYNPSEGSTWNPFDDD. The segment covering 668–692 has biased composition (polar residues); sequence TTTPSGSPRASQQNVYNPSEGSTWN. Tyr-683 is subject to Phosphotyrosine. 4 positions are modified to phosphoserine: Ser-727, Ser-842, Ser-933, and Ser-934. Positions 819–956 are clathrin-binding domain (CBD); it reads EKADVAVESL…SLLLVDQLID (138 aa). Disordered stretches follow at residues 832–855 and 919–941; these read LEPP…TDSL and VLIT…ESSL. The span at 840-855 shows a compositional bias: polar residues; the sequence is LPSQTESVTSNRTDSL. Residues 927 to 940 are compositionally biased toward low complexity; the sequence is GGHSRNSSGSSESS.

Belongs to the protein kinase superfamily. Ser/Thr protein kinase family. Interacts (via CBD domain) with clathrin. Interacts with AP-2 complex. Interacts with NUMB. Interacts with alpha-adaptin. Interacts with EPS15 isoform 2. Interacts with membrane-bound activated NOTCH1 but not with the inactive full-length form of NOTCH1. Preferentially interacts with monoubiquitinated activated NOTCH1 compared to the non-ubiquitinated form. In terms of processing, autophosphorylated. Detected in brain (at protein level).

The protein localises to the cell membrane. It is found in the membrane. It localises to the clathrin-coated pit. The protein resides in the presynapse. It catalyses the reaction L-seryl-[protein] + ATP = O-phospho-L-seryl-[protein] + ADP + H(+). The catalysed reaction is L-threonyl-[protein] + ATP = O-phospho-L-threonyl-[protein] + ADP + H(+). Its activity is regulated as follows. Stimulated by clathrin. Its function is as follows. Regulates clathrin-mediated endocytosis by phosphorylating the AP2M1/mu2 subunit of the adaptor protein complex 2 (AP-2) which ensures high affinity binding of AP-2 to cargo membrane proteins during the initial stages of endocytosis. Preferentially, may phosphorylate substrates on threonine residues. Regulates phosphorylation of other AP-2 subunits as well as AP-2 localization and AP-2-mediated internalization of ligand complexes. Phosphorylates NUMB and regulates its cellular localization, promoting NUMB localization to endosomes. Binds to and stabilizes the activated form of NOTCH1, increases its localization in endosomes and regulates its transcriptional activity. This Bos taurus (Bovine) protein is AP2-associated protein kinase 1 (AAK1).